The chain runs to 333 residues: Glyceraldehyde-3-phosphate dehydrogenase (333 aa).

NAD(+) is bound by residues 11 to 12 (RI), D33, R78, and S120. Residues 149-151 (SCT), T180, 209-210 (TG), and R232 each bind D-glyceraldehyde 3-phosphate. The Nucleophile role is filled by C150. S-nitrosocysteine is present on C150. Residue N314 participates in NAD(+) binding.

It belongs to the glyceraldehyde-3-phosphate dehydrogenase family. Homotetramer. Post-translationally, S-nitrosylation of Cys-150 leads to translocation to the nucleus.

The protein resides in the cytoplasm. Its subcellular location is the cytosol. The protein localises to the cytoskeleton. It localises to the nucleus. It catalyses the reaction D-glyceraldehyde 3-phosphate + phosphate + NAD(+) = (2R)-3-phospho-glyceroyl phosphate + NADH + H(+). The enzyme catalyses S-nitroso-L-cysteinyl-[GAPDH] + L-cysteinyl-[protein] = L-cysteinyl-[GAPDH] + S-nitroso-L-cysteinyl-[protein]. It functions in the pathway carbohydrate degradation; glycolysis; pyruvate from D-glyceraldehyde 3-phosphate: step 1/5. Functionally, has both glyceraldehyde-3-phosphate dehydrogenase and nitrosylase activities, thereby playing a role in glycolysis and nuclear functions, respectively. Glyceraldehyde-3-phosphate dehydrogenase is a key enzyme in glycolysis that catalyzes the first step of the pathway by converting D-glyceraldehyde 3-phosphate (G3P) into 3-phospho-D-glyceroyl phosphate. Participates in nuclear events including transcription, RNA transport, DNA replication and apoptosis. Nuclear functions are probably due to the nitrosylase activity that mediates cysteine S-nitrosylation of nuclear target proteins such as SIRT1, HDAC2 and PRKDC. This Danio rerio (Zebrafish) protein is Glyceraldehyde-3-phosphate dehydrogenase.